The primary structure comprises 338 residues: Fructose-1,6-bisphosphatase class 1 (338 aa).

Mg(2+) contacts are provided by Glu90, Asp112, Leu114, and Asp115. Substrate is bound by residues 115-118 (DGSS), Asn207, and Lys273. Glu279 serves as a coordination point for Mg(2+).

This sequence belongs to the FBPase class 1 family. Homotetramer. It depends on Mg(2+) as a cofactor.

Its subcellular location is the cytoplasm. It carries out the reaction beta-D-fructose 1,6-bisphosphate + H2O = beta-D-fructose 6-phosphate + phosphate. It participates in carbohydrate biosynthesis; gluconeogenesis. This chain is Fructose-1,6-bisphosphatase class 1, found in Stenotrophomonas maltophilia (strain K279a).